The following is a 227-amino-acid chain: Ribose-5-phosphate isomerase A (227 aa).

Substrate is bound by residues 26–29 (TGST), 82–85 (DGAD), and 95–98 (KGGG). E104 acts as the Proton acceptor in catalysis. K122 lines the substrate pocket.

It belongs to the ribose 5-phosphate isomerase family. Homodimer.

It carries out the reaction aldehydo-D-ribose 5-phosphate = D-ribulose 5-phosphate. The protein operates within carbohydrate degradation; pentose phosphate pathway; D-ribose 5-phosphate from D-ribulose 5-phosphate (non-oxidative stage): step 1/1. Catalyzes the reversible conversion of ribose-5-phosphate to ribulose 5-phosphate. In Streptococcus pneumoniae serotype 2 (strain D39 / NCTC 7466), this protein is Ribose-5-phosphate isomerase A.